We begin with the raw amino-acid sequence, 675 residues long: Mitochondrial distribution and morphology protein 12 (675 aa).

Positions 1-675 constitute an SMP-LTD domain; it reads MSIDLNWDTV…VYPSFWTFLV (675 aa). Disordered stretches follow at residues 66–186, 241–270, 307–327, 365–390, and 444–517; these read LPDF…GTNH, GPSW…GAGG, GTGK…PLGT, TGPR…VAPA, and PKQG…RFRE. Residues 78–101 are compositionally biased toward acidic residues; the sequence is SSEESDSEEEVAYENEGEYLDDPV. A compositionally biased stretch (low complexity) spans 123 to 137; sequence NSSTGSRNGSGPNSG. A compositionally biased stretch (gly residues) spans 261–270; that stretch reads GGAGGGGAGG. Positions 317 to 327 are enriched in low complexity; it reads PLTGTSTPLGT. Polar residues-rich tracts occupy residues 373–382 and 454–469; these read PSSQSLNSVG and VSTL…NNRA. Residues 497-510 are compositionally biased toward acidic residues; the sequence is EPEEDEEEEEEGEE.

Belongs to the MDM12 family. In terms of assembly, component of the ER-mitochondria encounter structure (ERMES) or MDM complex, composed of mmm-1, mdm10, mdm12 and mdm34. A mmm-1 homodimer associates with one molecule of mdm12 on each side in a pairwise head-to-tail manner, and the SMP-LTD domains of mmm-1 and mdm12 generate a continuous hydrophobic tunnel for phospholipid trafficking.

It is found in the mitochondrion outer membrane. The protein resides in the endoplasmic reticulum membrane. Functionally, component of the ERMES/MDM complex, which serves as a molecular tether to connect the endoplasmic reticulum (ER) and mitochondria. Components of this complex are involved in the control of mitochondrial shape and protein biogenesis, and function in nonvesicular lipid trafficking between the ER and mitochondria. Mdm12 is required for the interaction of the ER-resident membrane protein MMM1 and the outer mitochondrial membrane-resident beta-barrel protein mdm10. The mdm12-mmm-1 subcomplex functions in the major beta-barrel assembly pathway that is responsible for biogenesis of all mitochondrial outer membrane beta-barrel proteins, and acts in a late step after the SAM complex. The mdm10-mdm12-mmm-1 subcomplex further acts in the TOM40-specific pathway after the action of the mdm12-mmm1 complex. Essential for establishing and maintaining the structure of mitochondria and maintenance of mtDNA nucleoids. The protein is Mitochondrial distribution and morphology protein 12 of Neurospora crassa (strain ATCC 24698 / 74-OR23-1A / CBS 708.71 / DSM 1257 / FGSC 987).